A 665-amino-acid polypeptide reads, in one-letter code: DNA ligase (665 aa).

Residues 31-35 (DQEFD), 80-81 (SL), and glutamate 110 each bind NAD(+). Residue lysine 112 is the N6-AMP-lysine intermediate of the active site. Positions 133, 170, 285, and 309 each coordinate NAD(+). Zn(2+) contacts are provided by cysteine 403, cysteine 406, cysteine 421, and cysteine 427. The BRCT domain occupies 587–665 (EHTDKLAGKS…SEEEFLQMIE (79 aa)).

This sequence belongs to the NAD-dependent DNA ligase family. LigA subfamily. The cofactor is Mg(2+). Mn(2+) serves as cofactor.

It catalyses the reaction NAD(+) + (deoxyribonucleotide)n-3'-hydroxyl + 5'-phospho-(deoxyribonucleotide)m = (deoxyribonucleotide)n+m + AMP + beta-nicotinamide D-nucleotide.. Its function is as follows. DNA ligase that catalyzes the formation of phosphodiester linkages between 5'-phosphoryl and 3'-hydroxyl groups in double-stranded DNA using NAD as a coenzyme and as the energy source for the reaction. It is essential for DNA replication and repair of damaged DNA. This Phocaeicola vulgatus (strain ATCC 8482 / DSM 1447 / JCM 5826 / CCUG 4940 / NBRC 14291 / NCTC 11154) (Bacteroides vulgatus) protein is DNA ligase.